Here is a 757-residue protein sequence, read N- to C-terminus: Probable inorganic carbon transporter subunit DabA (757 aa).

Residues cysteine 321, aspartate 323, histidine 475, and cysteine 490 each coordinate Zn(2+).

Belongs to the inorganic carbon transporter (TC 9.A.2) DabA family. As to quaternary structure, forms a complex with DabB. Zn(2+) serves as cofactor.

It is found in the cell inner membrane. Functionally, part of an energy-coupled inorganic carbon pump. The polypeptide is Probable inorganic carbon transporter subunit DabA (Idiomarina loihiensis (strain ATCC BAA-735 / DSM 15497 / L2-TR)).